A 176-amino-acid polypeptide reads, in one-letter code: Large ribosomal subunit protein uL10 (176 aa).

The protein belongs to the universal ribosomal protein uL10 family. As to quaternary structure, part of the ribosomal stalk of the 50S ribosomal subunit. The N-terminus interacts with L11 and the large rRNA to form the base of the stalk. The C-terminus forms an elongated spine to which L12 dimers bind in a sequential fashion forming a multimeric L10(L12)X complex.

Its function is as follows. Forms part of the ribosomal stalk, playing a central role in the interaction of the ribosome with GTP-bound translation factors. This chain is Large ribosomal subunit protein uL10, found in Alcanivorax borkumensis (strain ATCC 700651 / DSM 11573 / NCIMB 13689 / SK2).